The following is a 335-amino-acid chain: Glycerol-3-phosphate dehydrogenase [NAD(P)+] (335 aa).

Serine 15, tyrosine 16, histidine 36, and lysine 110 together coordinate NADPH. The sn-glycerol 3-phosphate site is built by lysine 110, glycine 139, and threonine 141. An NADPH-binding site is contributed by alanine 143. Sn-glycerol 3-phosphate contacts are provided by lysine 195, aspartate 248, serine 258, arginine 259, and asparagine 260. Lysine 195 (proton acceptor) is an active-site residue. Arginine 259 is an NADPH binding site. Residues valine 283 and glutamate 285 each coordinate NADPH.

Belongs to the NAD-dependent glycerol-3-phosphate dehydrogenase family.

The protein resides in the cytoplasm. The catalysed reaction is sn-glycerol 3-phosphate + NAD(+) = dihydroxyacetone phosphate + NADH + H(+). The enzyme catalyses sn-glycerol 3-phosphate + NADP(+) = dihydroxyacetone phosphate + NADPH + H(+). It participates in membrane lipid metabolism; glycerophospholipid metabolism. Functionally, catalyzes the reduction of the glycolytic intermediate dihydroxyacetone phosphate (DHAP) to sn-glycerol 3-phosphate (G3P), the key precursor for phospholipid synthesis. The polypeptide is Glycerol-3-phosphate dehydrogenase [NAD(P)+] (Haemophilus influenzae (strain ATCC 51907 / DSM 11121 / KW20 / Rd)).